A 143-amino-acid polypeptide reads, in one-letter code: uncharacterized protein (143 aa).

2 consecutive transmembrane segments (helical) span residues 16 to 36 (LIFA…IFVW) and 48 to 68 (ICYI…FIYV). N-linked (GlcNAc...) asparagine; by host glycosylation is present at Asn-71.

Its subcellular location is the membrane. This is an uncharacterized protein from Acanthamoeba polyphaga (Amoeba).